The chain runs to 697 residues: Protein Niban 3 (697 aa).

Residues 1–48 (MGPDRKEVPLSRGTQAVVVGKGRGAPGDDSSMGGRPSSPLDKQQRQHL) form a disordered region.

This sequence belongs to the Niban family. In terms of tissue distribution, specifically expressed in B-lymphocytes.

This Homo sapiens (Human) protein is Protein Niban 3.